The primary structure comprises 338 residues: DNA-directed RNA polymerase I subunit RPA43 (338 aa).

The disordered stretch occupies residues 209–338 (EVSEEVTENG…PKRKGKSNFL (130 aa)). Residues serine 242, serine 304, and serine 316 each carry the phosphoserine modification. Position 322 is a phosphothreonine (threonine 322). Serine 328 is modified (phosphoserine). The segment covering 328–338 (SPKRKGKSNFL) has biased composition (basic residues).

The protein belongs to the eukaryotic RPA43 RNA polymerase subunit family. As to quaternary structure, component of the RNA polymerase I (Pol I) complex consisting of 13 subunits: a ten-subunit catalytic core composed of POLR1A/RPA1, POLR1B/RPA2, POLR1C/RPAC1, POLR1D/RPAC2, POLR1H/RPA12, POLR2E/RPABC1, POLR2F/RPABC2, POLR2H/RPABC3, POLR2K/RPABC4 and POLR2L/RPABC5; a mobile stalk subunit POLR1F/RPA43 protruding from the core and additional subunits homologous to general transcription factors POLR1E/RPA49 and POLR1G/RPA34. Interacts with RRN3/TIF-IA. In terms of tissue distribution, widely expressed. Expressed in all fetal and adult tissues tested, with highest expression in fetal lung, liver, and kidney, and low expression in all adult tissues.

It localises to the nucleus. The protein localises to the nucleolus. Component of RNA polymerase I (Pol I), a DNA-dependent RNA polymerase which synthesizes ribosomal RNA precursors using the four ribonucleoside triphosphates as substrates. Through its association with RRN3/TIF-IA may be involved in recruitment of Pol I to rDNA promoters. This Homo sapiens (Human) protein is DNA-directed RNA polymerase I subunit RPA43.